Here is a 440-residue protein sequence, read N- to C-terminus: 26S proteasome regulatory subunit 4 (440 aa).

The span at 1 to 13 (MGQSQSGGHGPGG) shows a compositional bias: gly residues. Residues 1 to 49 (MGQSQSGGHGPGGGKKDDKDKKKKYEPPVPTRVGKKKKKTKGPDAASKL) form a disordered region. Residue glycine 2 is the site of N-myristoyl glycine attachment. Phosphoserine is present on serine 4. The segment covering 14–26 (GKKDDKDKKKKYE) has biased composition (basic and acidic residues). A Phosphothreonine modification is found at threonine 53. Residues 84-104 (QMKPLEEKQEEERSKVDDLRG) form a disordered region. Residues 86–103 (KPLEEKQEEERSKVDDLR) show a composition bias toward basic and acidic residues. 226-233 (GPPGTGKT) serves as a coordination point for ATP. A Glycyl lysine isopeptide (Lys-Gly) (interchain with G-Cter in ubiquitin) cross-link involves residue lysine 237. Position 258 is an N6-acetyllysine (lysine 258). Phosphothreonine is present on threonine 434. Tyrosine 439 is modified (phosphotyrosine).

This sequence belongs to the AAA ATPase family. Component of the 19S proteasome regulatory particle complex. The 26S proteasome consists of a 20S core particle (CP) and two 19S regulatory subunits (RP). The regulatory particle is made of a lid composed of 9 subunits, a base containing 6 ATPases including PSMC1 and few additional components. Interacts with SCA7. Interacts with NGLY1. Interacts with PAAF1.

The protein resides in the cytoplasm. The protein localises to the nucleus. Its subcellular location is the membrane. Its function is as follows. Component of the 26S proteasome, a multiprotein complex involved in the ATP-dependent degradation of ubiquitinated proteins. This complex plays a key role in the maintenance of protein homeostasis by removing misfolded or damaged proteins, which could impair cellular functions, and by removing proteins whose functions are no longer required. Therefore, the proteasome participates in numerous cellular processes, including cell cycle progression, apoptosis, or DNA damage repair. PSMC1 belongs to the heterohexameric ring of AAA (ATPases associated with diverse cellular activities) proteins that unfolds ubiquitinated target proteins that are concurrently translocated into a proteolytic chamber and degraded into peptides. This chain is 26S proteasome regulatory subunit 4 (PSMC1), found in Homo sapiens (Human).